The following is a 564-amino-acid chain: MQLAVHQDDADILLKERNQLNESILDKYRVAGQIAQTGLKYVISLINDSYHLGKTETPYTCQELCVMGDSMVTRLLAKVYNNDIREKGISNPVSIELNEIVGNFAPEIDDASKFTFNAGDIVTITLGVHIDGYAANVSHTVVIYPTGVTIDNELKPPGPLLGSKADSICAAHIATETVVALLGMALTPEKLPTQLDPNNTKLVTGKQIRNIVNSIAESFNCTVVPGSKVRRIRRFLAGQAEGVVAEKDFKGVVWSESDQEELLLNKYNKNDDQQLVLHNKQGSEFTNNSSAIPTDEFVVAADEVYNVDIKMCSTSDFKELGLVTLEEIDEFTGLNNKTNEFKTKSTIYIRDYAVNYQLRLKNSRSLLGKIDKEFTVFPFKLSHTSPSFPATNSQDLATLKKELIANKLGLSELANRHLINAKPIQVTKFIPFETILKTSNPTGKHGIDSNKPALPGMEIPLPHLGISSLKLKALLKNSSSIANARESTTVILNSFNNANEVIRLTGGNNSAPSWVHSDYSLNPQCKESVDHLLQLTKDKRFGIKVKECQPMKLTADAPESMQMD.

Belongs to the peptidase M24 family. In terms of assembly, component of the nucleoplasmic and cytoplasmic pre-60S ribosomal particles.

The protein resides in the cytoplasm. Its subcellular location is the nucleus. In terms of biological role, probable metalloprotease involved in proper assembly of pre-ribosomal particles during the biogenesis of the 60S ribosomal subunit. Accompanies the pre-60S particles to the cytoplasm. This chain is Probable metalloprotease ARX1 (ARX1), found in Debaryomyces hansenii (strain ATCC 36239 / CBS 767 / BCRC 21394 / JCM 1990 / NBRC 0083 / IGC 2968) (Yeast).